Here is a 289-residue protein sequence, read N- to C-terminus: Glycerol facilitator-aquaporin gla (289 aa).

2 consecutive transmembrane segments (helical) span residues 10–30 and 41–61; these read ITEF…VANV and SWMI…VAFG. The short motif at 68 to 70 is the NPA 1 element; sequence NPA. 3 helical membrane-spanning segments follow: residues 87-107, 151-171, and 209-229; these read AQYI…IVMV, FVGS…FFGS, and MVAH…LGGP. The short motif at 235-237 is the NPA 2 element; that stretch reads NPA. The chain crosses the membrane as a helical span at residues 264–284; sequence WYAWVPVLAPILASLAAVALF.

The protein belongs to the MIP/aquaporin (TC 1.A.8) family.

It is found in the cell membrane. Mixed channel protein that transports both water and glycerol. The polypeptide is Glycerol facilitator-aquaporin gla (gla) (Lactococcus lactis subsp. lactis (strain IL1403) (Streptococcus lactis)).